We begin with the raw amino-acid sequence, 318 residues long: Guanidinopropionase (318 aa).

H126, D148, H150, D152, D240, and D242 together coordinate Mn(2+).

It belongs to the arginase family. Agmatinase subfamily. Homohexamer. Requires Mn(2+) as cofactor.

The enzyme catalyses 3-guanidinopropanoate + H2O = urea + beta-alanine. Its function is as follows. Catalyzes the hydrolysis of 3-guanidinopropanoate to beta-alanine and urea. Possesses low activity against 4-guanidinobutanoate. Has no activity against arginine and agmatine. This is Guanidinopropionase (gpuA) from Pseudomonas aeruginosa (strain ATCC 15692 / DSM 22644 / CIP 104116 / JCM 14847 / LMG 12228 / 1C / PRS 101 / PAO1).